Here is an 812-residue protein sequence, read N- to C-terminus: MPTEEHQTYRELPMLPLRGVLVFPYTVIHLDVGRKKSINAIEDAMLGSKEIFLATQKEAQTDEPDEEDIYEVGTVAEIRQILKMPGGTMRVLVEGLFRAEINAYLANDPYMKVRVEELRDKKIKSPELEALMRNLVGQFEQYVRMSKKIPPETVVSVVAIEEGGRLADVIASHLNLRINEKQRILELSDINKRLNYLCELLAKEMEVLELERKINIRVRKQMEKTQKEYYLREQIKAIQKELGEKDERSSEVEEFRERIKKANMPKDAEEKAFKELERLEKMPPMVAEAVVVRNYLDWILSLPWSLETRDRLDLKAAEAILDEDHYGLEKPKERILEYLAIRKLAKKMKGPILCLVGPPGVGKTSLGKSVGRSLGRKFIRMSLGGIRDEAEIRGHRRTYVGSMPGRILQGMKTAGSKNPVFLLDEIDKMTMDFRGDPASALLEVLDPEQNYIFSDHYLEIPFDLSKVMFITTANSVFNIPRPLLDRMEIIEITGYTEEDKVHIATDYLVPKQIKEHGLKESNITFSEGTLRRIIREYTREAGVRNLERQIASICRKVARQVVEDKDTFVHVASNSLNRFLGAGRYRYGVAESENQVGVATGLAWTESGGDILSIEVALLKGKGNLTLTGKLGEVMKESAQAALTYVRSKADELGINDEIRDKYDVHIHIPEGAIPKDGPSAGITLATALASAMSGLPVRSDVAMTGEITLRGRILPIGGVKEKILAAHRAGIAKVLLPVENKKDLAEIPAPVKRKIKLVLVSHMDEVLEETLLKLEAIQPGEDFPGVLLNPELVGENLNQDRVEPEANKDLC.

The region spanning 12 to 205 is the Lon N-terminal domain; it reads LPMLPLRGVL…YLCELLAKEM (194 aa). ATP is bound at residue 357–364; sequence GPPGVGKT. Residues 593–774 form the Lon proteolytic domain; it reads ENQVGVATGL…DEVLEETLLK (182 aa). Residues S680 and K723 contribute to the active site.

Belongs to the peptidase S16 family. As to quaternary structure, homohexamer. Organized in a ring with a central cavity.

It is found in the cytoplasm. It catalyses the reaction Hydrolysis of proteins in presence of ATP.. In terms of biological role, ATP-dependent serine protease that mediates the selective degradation of mutant and abnormal proteins as well as certain short-lived regulatory proteins. Required for cellular homeostasis and for survival from DNA damage and developmental changes induced by stress. Degrades polypeptides processively to yield small peptide fragments that are 5 to 10 amino acids long. Binds to DNA in a double-stranded, site-specific manner. The sequence is that of Lon protease from Syntrophomonas wolfei subsp. wolfei (strain DSM 2245B / Goettingen).